A 200-amino-acid chain; its full sequence is Peptidyl-tRNA hydrolase (200 aa).

Residue Tyr-15 participates in tRNA binding. The Proton acceptor role is filled by His-20. Tyr-66, Asn-68, and Asn-114 together coordinate tRNA.

Belongs to the PTH family. Monomer.

Its subcellular location is the cytoplasm. The catalysed reaction is an N-acyl-L-alpha-aminoacyl-tRNA + H2O = an N-acyl-L-amino acid + a tRNA + H(+). Functionally, hydrolyzes ribosome-free peptidyl-tRNAs (with 1 or more amino acids incorporated), which drop off the ribosome during protein synthesis, or as a result of ribosome stalling. In terms of biological role, catalyzes the release of premature peptidyl moieties from peptidyl-tRNA molecules trapped in stalled 50S ribosomal subunits, and thus maintains levels of free tRNAs and 50S ribosomes. This chain is Peptidyl-tRNA hydrolase, found in Paraburkholderia xenovorans (strain LB400).